The sequence spans 430 residues: Glucose-6-phosphate isomerase (430 aa).

The active-site Proton donor is the glutamate 284. Active-site residues include histidine 305 and lysine 420.

It belongs to the GPI family.

Its subcellular location is the cytoplasm. It carries out the reaction alpha-D-glucose 6-phosphate = beta-D-fructose 6-phosphate. It functions in the pathway carbohydrate biosynthesis; gluconeogenesis. It participates in carbohydrate degradation; glycolysis; D-glyceraldehyde 3-phosphate and glycerone phosphate from D-glucose: step 2/4. Functionally, catalyzes the reversible isomerization of glucose-6-phosphate to fructose-6-phosphate. The chain is Glucose-6-phosphate isomerase from Mycoplasmopsis synoviae (strain 53) (Mycoplasma synoviae).